Here is a 651-residue protein sequence, read N- to C-terminus: BTB/POZ domain-containing protein At3g44820 (651 aa).

Residues 25–96 form the BTB domain; it reads SDITVVVDDV…CYGARVDITS (72 aa). Residues 211 to 509 form the NPH3 domain; the sequence is DWWYEDISYL…LQVLFFEQMH (299 aa). A disordered region spans residues 611–651; that stretch reads DAKNDTVQNSVSSTPRSATADHTLPRSSRHSKHRKSFSFFG. Over residues 615-627 the composition is skewed to polar residues; the sequence is DTVQNSVSSTPRS. Residues 637 to 651 show a composition bias toward basic residues; it reads SSRHSKHRKSFSFFG.

This sequence belongs to the NPH3 family.

The protein operates within protein modification; protein ubiquitination. In terms of biological role, may act as a substrate-specific adapter of an E3 ubiquitin-protein ligase complex (CUL3-RBX1-BTB) which mediates the ubiquitination and subsequent proteasomal degradation of target proteins. The sequence is that of BTB/POZ domain-containing protein At3g44820 from Arabidopsis thaliana (Mouse-ear cress).